The following is a 566-amino-acid chain: Urease subunit alpha (566 aa).

The Urease domain maps to Gly-128–Phe-566. Residues His-133, His-135, and Lys-216 each coordinate Ni(2+). Lys-216 is modified (N6-carboxylysine). His-218 contacts substrate. Positions 245 and 271 each coordinate Ni(2+). His-319 serves as the catalytic Proton donor. A Ni(2+)-binding site is contributed by Asp-359.

Belongs to the metallo-dependent hydrolases superfamily. Urease alpha subunit family. As to quaternary structure, heterotrimer of UreA (gamma), UreB (beta) and UreC (alpha) subunits. Three heterotrimers associate to form the active enzyme. Ni cation is required as a cofactor. In terms of processing, carboxylation allows a single lysine to coordinate two nickel ions.

It localises to the cytoplasm. The catalysed reaction is urea + 2 H2O + H(+) = hydrogencarbonate + 2 NH4(+). It functions in the pathway nitrogen metabolism; urea degradation; CO(2) and NH(3) from urea (urease route): step 1/1. The sequence is that of Urease subunit alpha from Nitrosococcus oceani (strain ATCC 19707 / BCRC 17464 / JCM 30415 / NCIMB 11848 / C-107).